Consider the following 425-residue polypeptide: Serine hydroxymethyltransferase (425 aa).

(6S)-5,6,7,8-tetrahydrofolate is bound by residues Leu128 and Gly132–Leu134. N6-(pyridoxal phosphate)lysine is present on Lys237.

This sequence belongs to the SHMT family. As to quaternary structure, homodimer. Pyridoxal 5'-phosphate is required as a cofactor.

It is found in the cytoplasm. The catalysed reaction is (6R)-5,10-methylene-5,6,7,8-tetrahydrofolate + glycine + H2O = (6S)-5,6,7,8-tetrahydrofolate + L-serine. It functions in the pathway one-carbon metabolism; tetrahydrofolate interconversion. The protein operates within amino-acid biosynthesis; glycine biosynthesis; glycine from L-serine: step 1/1. Functionally, catalyzes the reversible interconversion of serine and glycine with tetrahydrofolate (THF) serving as the one-carbon carrier. This reaction serves as the major source of one-carbon groups required for the biosynthesis of purines, thymidylate, methionine, and other important biomolecules. Also exhibits THF-independent aldolase activity toward beta-hydroxyamino acids, producing glycine and aldehydes, via a retro-aldol mechanism. In Wolbachia pipientis wMel, this protein is Serine hydroxymethyltransferase.